We begin with the raw amino-acid sequence, 55 residues long: MKIKLVRSVIGRPGNQVKTVQALGLRKIGDSREVSDTPAVRGMVKTVKHLLEVQE.

The protein belongs to the universal ribosomal protein uL30 family. Part of the 50S ribosomal subunit.

Binds the 5S and 23S rRNAs. The polypeptide is Large ribosomal subunit protein uL30 (Deinococcus radiodurans (strain ATCC 13939 / DSM 20539 / JCM 16871 / CCUG 27074 / LMG 4051 / NBRC 15346 / NCIMB 9279 / VKM B-1422 / R1)).